We begin with the raw amino-acid sequence, 952 residues long: Chaperone protein ClpC2, chloroplastic (952 aa).

The N-terminal 45 residues, 1-45 (MAWSIALLTPPFFGPGRHVQAKEYREPRGCVMKMSSLKAPVLRIQ), are a transit peptide targeting the chloroplast. Residues 115-257 (FERFTEKAIK…RTQVIRMVGE (143 aa)) form the Clp R domain. Repeat regions lie at residues 118-183 (FTEK…IGRG) and 193-257 (FTPR…MVGE). An i region spans residues 278 to 525 (LEEYGTNLTK…RVRLRHAQLP (248 aa)). Residue 323–330 (GEPGVGKT) coordinates ATP. One can recognise a UVR domain in the interval 532 to 567 (EKQLRQITKEKNEAVRSQDFEMAGSHRDREIELKAE). The II stretch occupies residues 592-783 (VTESDIQHIV…LLIMTSNVGS (192 aa)). ATP is bound at residue 666–673 (GPTGVGKS).

This sequence belongs to the ClpA/ClpB family. ClpC subfamily. As to quaternary structure, homodimer and homohexamer. Hexamerization upon addition of ATP. Interacts with CLPT1. Interacts with CLPS1. Stably associated with the import machinery. Interacts with CLPF. Mg(2+) serves as cofactor. Expressed at low levels in roots and inflorescences. Expressed at very low levels in rosette leaves. Expressed in photosynthetic green tissues with high levels in young, developing leaf tissues.

It is found in the plastid. The protein resides in the chloroplast stroma. It localises to the chloroplast membrane. It carries out the reaction ATP + H2O = ADP + phosphate + H(+). Its function is as follows. Molecular chaperone. May act as a suppressor of FtsH-mediated thylakoid membrane biogenesis and may enhance photoinhibition. Seems not involved in chloroplastic protein import. Probable component of the TIC-associated stromal import motor involved in inner membrane translocation. Has an ATPase activity, but no ADPase activity. Interacts with transit peptides with a positional preference. Localization of the signal sequence at the N-terminal end of a protein seems mandatory for interaction to take place. The chain is Chaperone protein ClpC2, chloroplastic from Arabidopsis thaliana (Mouse-ear cress).